Here is a 161-residue protein sequence, read N- to C-terminus: V-type proton ATPase 16 kDa proteolipid subunit c 2 (161 aa).

Over 1–15 (MSYDLETAEHAAYAP) the chain is Lumenal. A helical membrane pass occupies residues 16-36 (FFGYMGAASAQIFTVLGAAYG). Over 37–58 (TAKSAVGICSMGVMRPELIMKS) the chain is Cytoplasmic. Residues 59–79 (VIPVIMAGIIGIYGLVVAMVL) form a helical membrane-spanning segment. Topologically, residues 80 to 98 (KGKVQAASAGYDLNKGFAH) are lumenal. The helical transmembrane segment at 99-119 (LAAGLTCGLCGLGAGYAIGIV) threads the bilayer. The Cytoplasmic segment spans residues 120 to 137 (GDAGVRGTAQQPRLFVGM). Residues 138-158 (ILILIFSEVLGLYGMIVALIL) form a helical membrane-spanning segment. At 159–161 (GTS) the chain is on the lumenal side.

This sequence belongs to the V-ATPase proteolipid subunit family. V-ATPase is a heteromultimeric enzyme made up of two complexes: the ATP-hydrolytic V1 complex and the proton translocation V0 complex. The V1 complex consists of three catalytic AB heterodimers that form a heterohexamer, three peripheral stalks each consisting of EG heterodimers, one central rotor including subunits D and F, and the regulatory subunits C and H. The proton translocation complex V0 consists of the proton transport subunit a, a ring of proteolipid subunits c9c'', rotary subunit d, subunits e and f, and the accessory subunits vah-19/Ac45 and vah-20/PRR.

It is found in the membrane. Functionally, proton-conducting pore forming subunit of the V0 complex of vacuolar(H+)-ATPase (V-ATPase), a multisubunit enzyme composed of a peripheral complex (V1) that hydrolyzes ATP and a membrane integral complex (V0) that translocates protons. V-ATPase is responsible for acidifying and maintaining the pH of intracellular compartments and in some cell types, is targeted to the plasma membrane, where it is responsible for acidifying the extracellular environment. Involved in necrotic cell death. Required along with other vacuolar ATPase components for the removal of protein aggregates which form in immature oocytes in the distal gonad. This removal occurs as the oocytes mature and move to the proximal gonad, is triggered by the introduction of sperm through mating and occurs before fertilization. The introduction of sperm triggers V-ATPase accumulation in proximal oocytes and induces lysosomal acidification which leads to engulfing of protein aggregates by lysosomes and subsequent clearance of the aggregates. Lysosomal acidification also leads to changes in mitochondrial morphology and function. Mitochondria in distal immature oocytes are fragmented, produce high levels of reactive oxygen species (ROS) and have high membrane potential, indicative of metabolic inactivity. In contrast, mitochondria in proximal mature oocytes are tubular with lower ROS levels and membrane potential, indicative of an active metabolic state required for aggregate mobilization before clearance. The protein is V-type proton ATPase 16 kDa proteolipid subunit c 2 of Caenorhabditis briggsae.